Consider the following 888-residue polypeptide: Semaphorin-6B (888 aa).

The N-terminal stretch at 1 to 25 is a signal peptide; sequence MQTPRASPPRPALLLLLLLLGGAHG. Residues 26 to 603 lie on the Extracellular side of the membrane; sequence LFPEEPPPLS…VSVNLLVTSS (578 aa). In terms of domain architecture, Sema spans 31–523; it reads PPPLSVAPRD…FPRCVVRVPV (493 aa). N74 carries N-linked (GlcNAc...) asparagine glycosylation. 2 disulfides stabilise this stretch: C116/C126 and C144/C153. N155, N167, and N291 each carry an N-linked (GlcNAc...) asparagine glycan. Disulfide bonds link C267/C378 and C292/C337. 3 N-linked (GlcNAc...) asparagine glycosylation sites follow: N386, N441, and N462. Disulfide bonds link C486/C517, C526/C544, C532/C578, and C536/C552. Residues 604–624 form a helical membrane-spanning segment; it reads VAAFVVGAVVSGFSVGWFVGL. Over 625–888 the chain is Cytoplasmic; sequence RERRELARRK…GADRTAPPVP (264 aa). Disordered stretches follow at residues 651 to 679, 695 to 742, and 757 to 888; these read VSRL…PPEA, LQGG…HPLL, and RAPE…PPVP. The segment covering 661 to 674 has biased composition (gly residues); it reads GPGGRGGGGGGGAG. At R665 the chain carries Omega-N-methylarginine. Positions 706–717 are enriched in low complexity; sequence LLPTPEQTPLPQ.

The protein belongs to the semaphorin family. (Microbial infection) Interacts with P.sordellii toxin TcsL; semaphorins SEMA6A and SEMA6B constitute the major host receptors for TcsL in the vascular endothelium. As to expression, expressed in the brain in GABAergic neurons.

It is found in the cell membrane. In terms of biological role, functions as a cell surface repellent for mossy fibers of developing neurons in the hippocampus where it plays a role in axon guidance. May function through the PLXNA4 receptor expressed by mossy cell axons. (Microbial infection) Acts as a receptor for P.sordellii toxin TcsL in the in the vascular endothelium. This chain is Semaphorin-6B (SEMA6B), found in Homo sapiens (Human).